The following is a 340-amino-acid chain: Protein RecA (340 aa).

Position 65-72 (65-72) interacts with ATP; that stretch reads GPESGGKT.

It belongs to the RecA family.

The protein localises to the cytoplasm. Its function is as follows. Can catalyze the hydrolysis of ATP in the presence of single-stranded DNA, the ATP-dependent uptake of single-stranded DNA by duplex DNA, and the ATP-dependent hybridization of homologous single-stranded DNAs. It interacts with LexA causing its activation and leading to its autocatalytic cleavage. The protein is Protein RecA of Thermus thermophilus (strain ATCC BAA-163 / DSM 7039 / HB27).